We begin with the raw amino-acid sequence, 450 residues long: Tubulin alpha chain (450 aa).

The MREC motif signature appears at 1-4 (MREC). Q11 is a GTP binding site. K40 is modified (N6-acetyllysine). Positions 71, 140, 144, 145, 179, 206, and 228 each coordinate GTP. A Mg(2+)-binding site is contributed by E71. Residue E254 is part of the active site. E444 carries the post-translational modification 5-glutamyl polyglutamate.

It belongs to the tubulin family. In terms of assembly, dimer of alpha and beta chains. A typical microtubule is a hollow water-filled tube with an outer diameter of 25 nm and an inner diameter of 15 nM. Alpha-beta heterodimers associate head-to-tail to form protofilaments running lengthwise along the microtubule wall with the beta-tubulin subunit facing the microtubule plus end conferring a structural polarity. Microtubules usually have 13 protofilaments but different protofilament numbers can be found in some organisms and specialized cells. The cofactor is Mg(2+). Some glutamate residues at the C-terminus are polyglycylated, resulting in polyglycine chains on the gamma-carboxyl group. Glycylation is mainly limited to tubulin incorporated into axonemes (cilia and flagella) whereas glutamylation is prevalent in neuronal cells, centrioles, axonemes, and the mitotic spindle. Both modifications can coexist on the same protein on adjacent residues, and lowering polyglycylation levels increases polyglutamylation, and reciprocally. The precise function of polyglycylation is still unclear. In terms of processing, some glutamate residues at the C-terminus are polyglutamylated, resulting in polyglutamate chains on the gamma-carboxyl group. Polyglutamylation plays a key role in microtubule severing by spastin (SPAST). SPAST preferentially recognizes and acts on microtubules decorated with short polyglutamate tails: severing activity by SPAST increases as the number of glutamates per tubulin rises from one to eight, but decreases beyond this glutamylation threshold. Post-translationally, acetylation of alpha chains at Lys-40 is located inside the microtubule lumen. This modification has been correlated with increased microtubule stability, intracellular transport and ciliary assembly. Undergoes a tyrosination/detyrosination cycle, the cyclic removal and re-addition of a C-terminal tyrosine residue by the enzymes tubulin tyrosine carboxypeptidase (MATCAP, VASH1 or VASH2) and tubulin tyrosine ligase (TTL), respectively. In terms of processing, tyrosination promotes microtubule interaction with CAP-Gly microtubule plus-end tracking proteins. Tyrosinated tubulins regulate the initiation of dynein-driven motility. Post-translationally, detyrosination is involved in metaphase plate congression by guiding chromosomes during mitosis. Detyrosination increases microtubules-dependent mechanotransduction in dystrophic cardiac and skeletal muscle. In cardiomyocytes, detyrosinated microtubules are required to resist to contractile compression during contraction.

The protein resides in the cytoplasm. It localises to the cytoskeleton. The catalysed reaction is GTP + H2O = GDP + phosphate + H(+). Functionally, tubulin is the major constituent of microtubules, a cylinder consisting of laterally associated linear protofilaments composed of alpha- and beta-tubulin heterodimers. Microtubules grow by the addition of GTP-tubulin dimers to the microtubule end, where a stabilizing cap forms. Below the cap, tubulin dimers are in GDP-bound state, owing to GTPase activity of alpha-tubulin. The chain is Tubulin alpha chain from Notophthalmus viridescens (Eastern newt).